The primary structure comprises 143 residues: Large ribosomal subunit protein uL15 (143 aa).

Basic residues-rich tracts occupy residues 1 to 13 (MIRK…KQRG) and 23 to 38 (KKHR…GNAG). A disordered region spans residues 1–38 (MIRKSKKITKQRGSRTCGYGEAKKHRGAGHRGGRGNAG).

This sequence belongs to the universal ribosomal protein uL15 family. In terms of assembly, part of the 50S ribosomal subunit.

Binds to the 23S rRNA. The sequence is that of Large ribosomal subunit protein uL15 from Methanococcus vannielii.